The following is a 373-amino-acid chain: Putative glutamate--cysteine ligase 2-1 (373 aa).

The protein belongs to the glutamate--cysteine ligase type 2 family. YbdK subfamily.

The enzyme catalyses L-cysteine + L-glutamate + ATP = gamma-L-glutamyl-L-cysteine + ADP + phosphate + H(+). ATP-dependent carboxylate-amine ligase which exhibits weak glutamate--cysteine ligase activity. This is Putative glutamate--cysteine ligase 2-1 from Legionella pneumophila (strain Lens).